The primary structure comprises 277 residues: Inorganic pyrophosphatase (277 aa).

Residue Arg80 coordinates diphosphate. Asp117, Asp122, and Asp154 together coordinate Mg(2+).

This sequence belongs to the PPase family. Requires Mg(2+) as cofactor.

The protein localises to the cytoplasm. The enzyme catalyses diphosphate + H2O = 2 phosphate + H(+). Its function is as follows. Involved in osmoadaptation. This chain is Inorganic pyrophosphatase (IPP1), found in Encephalitozoon cuniculi (strain GB-M1) (Microsporidian parasite).